A 324-amino-acid chain; its full sequence is Protein SRC2 homolog (324 aa).

Residues 1–111 (MECRSLDLTI…LDQNKGDEEK (111 aa)) form the C2 domain. Topologically, residues 1-279 (MECRSLDLTI…KPQKPKKHGK (279 aa)) are cytoplasmic. The disordered stretch occupies residues 141 to 281 (GSSSGPHAPV…QKPKKHGKAG (141 aa)). 2 stretches are compositionally biased toward low complexity: residues 166–175 (YPPGHGAPSA) and 246–269 (PYGY…QAHG). Over residues 270-279 (KPQKPKKHGK) the composition is skewed to basic residues. Residues 280–300 (AGAGMGLGLGLGAGLLGGLLV) form a helical; Signal-anchor membrane-spanning segment. At 301–324 (GEAVSDIADMGDMGDMGDMGGFDF) the chain is on the lumenal side.

As to quaternary structure, interacts with RBOHF (via N-terminus).

It localises to the endoplasmic reticulum membrane. It is found in the protein storage vacuole membrane. Its subcellular location is the cell membrane. May act as an activator of the calcium-dependent activation of RBOHF that mediates reactive oxygen species (ROS) production and may play a role in cold responses. This chain is Protein SRC2 homolog, found in Arabidopsis thaliana (Mouse-ear cress).